A 180-amino-acid polypeptide reads, in one-letter code: N-terminal acetyltransferase B complex catalytic subunit naa20 (180 aa).

An N-acetyltransferase domain is found at 2 to 156 (TDTRKFKATD…DSFDMRKPLS (155 aa)).

The protein belongs to the acetyltransferase family. Component of the N-terminal acetyltransferase B (NatB) complex.

The protein localises to the cytoplasm. The protein resides in the nucleus. It carries out the reaction N-terminal L-methionyl-L-asparaginyl-[protein] + acetyl-CoA = N-terminal N(alpha)-acetyl-L-methionyl-L-asparaginyl-[protein] + CoA + H(+). The enzyme catalyses N-terminal L-methionyl-L-glutaminyl-[protein] + acetyl-CoA = N-terminal N(alpha)-acetyl-L-methionyl-L-glutaminyl-[protein] + CoA + H(+). It catalyses the reaction N-terminal L-methionyl-L-aspartyl-[protein] + acetyl-CoA = N-terminal N(alpha)-acetyl-L-methionyl-L-aspartyl-[protein] + CoA + H(+). The catalysed reaction is N-terminal L-methionyl-L-glutamyl-[protein] + acetyl-CoA = N-terminal N(alpha)-acetyl-L-methionyl-L-glutamyl-[protein] + CoA + H(+). In terms of biological role, catalytic subunit of the NatB N-terminal acetyltransferase, which catalyzes acetylation of the amino-terminal methionine residues of all proteins beginning with Met-Asp or Met-Glu and of some proteins beginning with Met-Asn, Met-Gln or Met-Met. This chain is N-terminal acetyltransferase B complex catalytic subunit naa20 (naa20), found in Schizosaccharomyces pombe (strain 972 / ATCC 24843) (Fission yeast).